We begin with the raw amino-acid sequence, 247 residues long: Probable transcriptional regulatory protein TDE_1487 (247 aa).

It belongs to the TACO1 family.

The protein localises to the cytoplasm. This chain is Probable transcriptional regulatory protein TDE_1487, found in Treponema denticola (strain ATCC 35405 / DSM 14222 / CIP 103919 / JCM 8153 / KCTC 15104).